The chain runs to 313 residues: Aspartate carbamoyltransferase catalytic subunit (313 aa).

Carbamoyl phosphate-binding residues include Arg58 and Thr59. An L-aspartate-binding site is contributed by Lys86. Positions 108, 136, and 139 each coordinate carbamoyl phosphate. L-aspartate contacts are provided by Arg169 and Arg223. Carbamoyl phosphate is bound by residues Gly265 and Pro266.

It belongs to the aspartate/ornithine carbamoyltransferase superfamily. ATCase family. As to quaternary structure, heterododecamer (2C3:3R2) of six catalytic PyrB chains organized as two trimers (C3), and six regulatory PyrI chains organized as three dimers (R2).

It catalyses the reaction carbamoyl phosphate + L-aspartate = N-carbamoyl-L-aspartate + phosphate + H(+). The protein operates within pyrimidine metabolism; UMP biosynthesis via de novo pathway; (S)-dihydroorotate from bicarbonate: step 2/3. Catalyzes the condensation of carbamoyl phosphate and aspartate to form carbamoyl aspartate and inorganic phosphate, the committed step in the de novo pyrimidine nucleotide biosynthesis pathway. This Anaeromyxobacter dehalogenans (strain 2CP-C) protein is Aspartate carbamoyltransferase catalytic subunit.